The chain runs to 635 residues: DNA-directed RNA polymerase subunit gamma (635 aa).

Residues C74, C76, C89, and C92 each coordinate Zn(2+). Mg(2+) is bound by residues D471, D473, and D475.

The protein belongs to the RNA polymerase beta' chain family. RpoC1 subfamily. In terms of assembly, in cyanobacteria the RNAP catalytic core is composed of 2 alpha, 1 beta, 1 beta', 1 gamma and 1 omega subunit. When a sigma factor is associated with the core the holoenzyme is formed, which can initiate transcription. The cofactor is Mg(2+). Zn(2+) serves as cofactor.

The enzyme catalyses RNA(n) + a ribonucleoside 5'-triphosphate = RNA(n+1) + diphosphate. DNA-dependent RNA polymerase catalyzes the transcription of DNA into RNA using the four ribonucleoside triphosphates as substrates. The polypeptide is DNA-directed RNA polymerase subunit gamma (Prochlorococcus marinus (strain NATL1A)).